We begin with the raw amino-acid sequence, 612 residues long: Rhamnogalacturonan exolyase YesX (612 aa).

Asn-119 is a substrate binding site. The Ca(2+) site is built by Asp-120, Asp-125, Asp-127, Asp-129, Glu-131, and Glu-133. Substrate contacts are provided by Asp-139, Glu-154, and Arg-174. Ca(2+)-binding residues include Asp-189, Asp-191, Asp-193, Lys-195, and Glu-197. 2 residues coordinate substrate: Gly-205 and Arg-222. Ca(2+) is bound by residues His-330, Asp-336, Asp-338, Asp-340, Lys-342, Glu-344, Asp-353, His-354, His-366, Asp-368, Asp-374, Asp-376, Arg-379, Gly-381, Glu-383, and Glu-389. Arg-419 contacts substrate. The Ca(2+) site is built by Asp-472, Asp-474, Val-476, and Glu-478. Residue 516-518 coordinates substrate; that stretch reads NGT. Residues Asn-527, Phe-529, Asp-531, Arg-533, Glu-535, Asn-576, and Ala-578 each contribute to the Ca(2+) site. Residue Tyr-579 participates in substrate binding. Asn-580 lines the Ca(2+) pocket.

Belongs to the polysaccharide lyase 11 family. In terms of assembly, monomer. Mn(2+) serves as cofactor. Zn(2+) is required as a cofactor. The cofactor is Co(2+). Requires Ca(2+) as cofactor.

The protein localises to the secreted. The catalysed reaction is Exotype eliminative cleavage of alpha-L-rhamnopyranosyl-(1-&gt;4)-alpha-D-galactopyranosyluronic acid bonds of rhamnogalacturonan I oligosaccharides containing alpha-L-rhamnopyranose at the reducing end and 4-deoxy-4,5-unsaturated D-galactopyranosyluronic acid at the non-reducing end. The products are the disaccharide 2-O-(4-deoxy-beta-L-threo-hex-4-enopyranuronosyl)-alpha-L-rhamnopyranose and the shortened rhamnogalacturonan oligosaccharide containing one 4-deoxy-4,5-unsaturated D-galactopyranosyluronic acid at the non-reducing end.. Functionally, pectinolytic enzyme that degrades type I rhamnogalacturonan from plant cell walls and releases disaccharide products. Degrades rhamnogalacturonan, polygalacturonic acid and pectic acid. Has very low activity on pectin. This is Rhamnogalacturonan exolyase YesX (yesX) from Bacillus subtilis (strain 168).